Reading from the N-terminus, the 184-residue chain is Ras-related protein RabN2 (184 aa).

3–10 (GDYRSGKT) lines the GTP pocket. The Effector region signature appears at 25 to 32 (TNPSTFDY). Residues 50 to 54 (DTAGH) and 117 to 120 (TKSD) contribute to the GTP site.

This sequence belongs to the small GTPase superfamily. Rab family.

The protein is Ras-related protein RabN2 (rabN2) of Dictyostelium discoideum (Social amoeba).